Here is a 425-residue protein sequence, read N- to C-terminus: Serine--tRNA ligase (425 aa).

T231–E233 is an L-serine binding site. R262–E264 is a binding site for ATP. E285 contributes to the L-serine binding site. E349–S352 contributes to the ATP binding site. Residue S385 participates in L-serine binding.

The protein belongs to the class-II aminoacyl-tRNA synthetase family. Type-1 seryl-tRNA synthetase subfamily. As to quaternary structure, homodimer. The tRNA molecule binds across the dimer.

The protein localises to the cytoplasm. It catalyses the reaction tRNA(Ser) + L-serine + ATP = L-seryl-tRNA(Ser) + AMP + diphosphate + H(+). The enzyme catalyses tRNA(Sec) + L-serine + ATP = L-seryl-tRNA(Sec) + AMP + diphosphate + H(+). It participates in aminoacyl-tRNA biosynthesis; selenocysteinyl-tRNA(Sec) biosynthesis; L-seryl-tRNA(Sec) from L-serine and tRNA(Sec): step 1/1. Its function is as follows. Catalyzes the attachment of serine to tRNA(Ser). Is also able to aminoacylate tRNA(Sec) with serine, to form the misacylated tRNA L-seryl-tRNA(Sec), which will be further converted into selenocysteinyl-tRNA(Sec). This is Serine--tRNA ligase from Exiguobacterium sibiricum (strain DSM 17290 / CCUG 55495 / CIP 109462 / JCM 13490 / 255-15).